Reading from the N-terminus, the 2614-residue chain is Talin-B (2614 aa).

Residues 85–369 form the FERM domain; sequence RPLKVRLMDE…GYIEILMKKR (285 aa). Residues 393-421 are disordered; the sequence is RGQTSQATTSSSLSGYDGNGGREGQYSAP. A compositionally biased stretch (low complexity) spans 395–406; that stretch reads QTSQATTSSSLS. Coiled coils occupy residues 1938–1965 and 2033–2057; these read TQNI…ASGK and NKAI…LVQS. The 242-residue stretch at 2219–2460 folds into the I/LWEQ domain; sequence LLFAAGESLE…SIRKKEYSDQ (242 aa). The tract at residues 2454 to 2557 is disordered; it reads KKEYSDQTGN…AAPTAAAPNK (104 aa). A compositionally biased stretch (polar residues) spans 2473–2487; that stretch reads KPTTSISVGITPTKR. Over residues 2517 to 2537 the composition is skewed to low complexity; the sequence is KKPAPSQAPSSPVAPVSAPVS. Residues 2538 to 2548 show a composition bias toward pro residues; it reads KPSPKPAPKPA. The region spanning 2553–2614 is the HP domain; that stretch reads AAPNKTYTLE…NNIKTKLGLF (62 aa).

It localises to the cytoplasm. It is found in the cytoskeleton. Its subcellular location is the cell cortex. Its function is as follows. Actin-binding protein required for multicellular morphogenesis. Substrate of pkgB and/or pkbA. The protein is Talin-B (talB) of Dictyostelium discoideum (Social amoeba).